A 198-amino-acid polypeptide reads, in one-letter code: uncharacterized protein (198 aa).

This is an uncharacterized protein from Homo sapiens (Human).